We begin with the raw amino-acid sequence, 504 residues long: ATP-dependent RNA helicase DBP3 (504 aa).

Residues 1-14 are compositionally biased toward basic and acidic residues; it reads MSKDELKDKKRKVE. A disordered region spans residues 1-65; that stretch reads MSKDELKDKK…KSETESFAAS (65 aa). Positions 20–53 are enriched in basic residues; sequence SKKKLKKDKKDKKDKKDKKDKKDKKEKKEKKEKK. Positions 94–120 match the Q motif motif; the sequence is LDFSQVSFIDQIQKEISKFPKPTPIQA. The Helicase ATP-binding domain occupies 123-296; sequence WPYLLAGKDV…SSFMSEPVKV (174 aa). ATP is bound at residue 136–143; it reads AETGSGKT. A DEAD box motif is present at residues 243–246; it reads DEAD. Positions 325–474 constitute a Helicase C-terminal domain; the sequence is KLLELLKKYH…PVPEELKKFG (150 aa).

The protein belongs to the DEAD box helicase family. DDX5/DBP2 subfamily.

The protein localises to the nucleus. The protein resides in the nucleolus. It catalyses the reaction ATP + H2O = ADP + phosphate + H(+). ATP-dependent RNA helicase required for 60S ribosomal subunit synthesis. Involved in efficient pre-rRNA processing, predominantly at site A3, which is necessary for the normal formation of 25S and 5.8S rRNAs. In Kluyveromyces lactis (strain ATCC 8585 / CBS 2359 / DSM 70799 / NBRC 1267 / NRRL Y-1140 / WM37) (Yeast), this protein is ATP-dependent RNA helicase DBP3 (DBP3).